A 291-amino-acid polypeptide reads, in one-letter code: Malectin (291 aa).

Positions 1-30 are cleaved as a signal peptide; that stretch reads MLRPRGAEGTAVALLRLLLLLLLLGPKLRG. The Lumenal portion of the chain corresponds to 31–268; it reads PGLGVVGAAG…TPNPYASDNS (238 aa). The a carbohydrate site is built by Y81, Y103, Y130, F131, and D200. The disordered stretch occupies residues 220 to 264; that stretch reads LQPHPGLEKKEEEEEEEEYDEGSNLKRQTNKNRVQSGPRTPNPYA. A compositionally biased stretch (acidic residues) spans 230 to 240; that stretch reads EEEEEEEEYDE. Residues 244-264 are compositionally biased toward polar residues; the sequence is LKRQTNKNRVQSGPRTPNPYA. N-linked (GlcNAc...) asparagine glycosylation occurs at N267. The chain crosses the membrane as a helical span at residues 269-289; sequence SLMFPILVAFGVFIPTLFCLC. At 290-291 the chain is on the cytoplasmic side; sequence RL.

Belongs to the malectin family. As to quaternary structure, interacts with the oligosaccharyltransferase (OST) complex.

Its subcellular location is the endoplasmic reticulum membrane. Carbohydrate-binding protein with a strong ligand preference for Glc2-N-glycan. May play a role in the early steps of protein N-glycosylation. The sequence is that of Malectin from Mus musculus (Mouse).